The chain runs to 294 residues: Nucleoside-specific channel-forming protein Tsx (294 aa).

The first 22 residues, 1–22 (MKKTLLAASAVVALSASFTAGA), serve as a signal peptide directing secretion.

Belongs to the nucleoside-specific channel-forming outer membrane porin (Tsx) (TC 1.B.10) family.

It is found in the cell outer membrane. Functionally, functions as a substrate-specific channel for nucleosides and deoxynucleosides. Also functions in albicidin uptake and as receptor for colicin K. Also is a receptor for several Tsx-specific bacteriophages. This Klebsiella aerogenes (strain ATCC 13048 / DSM 30053 / CCUG 1429 / JCM 1235 / KCTC 2190 / NBRC 13534 / NCIMB 10102 / NCTC 10006 / CDC 819-56) (Enterobacter aerogenes) protein is Nucleoside-specific channel-forming protein Tsx.